We begin with the raw amino-acid sequence, 329 residues long: DNA-directed RNA polymerase subunit alpha (329 aa).

The segment at 1–234 is alpha N-terminal domain (alpha-NTD); the sequence is MQGSVTEFLK…EQLDAFVELR (234 aa). Residues 248–329 are alpha C-terminal domain (alpha-CTD); that stretch reads FDPILLRPVD…WPPASLADDL (82 aa).

This sequence belongs to the RNA polymerase alpha chain family. As to quaternary structure, homodimer. The RNAP catalytic core consists of 2 alpha, 1 beta, 1 beta' and 1 omega subunit. When a sigma factor is associated with the core the holoenzyme is formed, which can initiate transcription.

The catalysed reaction is RNA(n) + a ribonucleoside 5'-triphosphate = RNA(n+1) + diphosphate. Its function is as follows. DNA-dependent RNA polymerase catalyzes the transcription of DNA into RNA using the four ribonucleoside triphosphates as substrates. The polypeptide is DNA-directed RNA polymerase subunit alpha (Shewanella amazonensis (strain ATCC BAA-1098 / SB2B)).